Here is a 270-residue protein sequence, read N- to C-terminus: MKVALVYNDKVETLAVVKALEKLLNARKIEIDPENPDVVITIGGDGTLISGFHKYQNLVDKIRFIGVHTGHLGFYTDWRNFEINKMVDNLTKKQPSSASYPLLELIITTGAGEKKKLLALNEATIKRVSKTLKADVYIRDQFFESFKGDGLCVSTPTGSTAYSKSLGGAVIHPRLKALQMTEIASINNRVFRTLSSPIVIAPDEWITIKPETGSDDHYVVTFDGYEFNHKHIKKIEYRISQHVIRFDKYQHTHFWNRVEDAFIGQPKDKQ.

The Proton acceptor role is filled by Asp-45. Residues 45–46, 121–122, Lys-147, Asp-149, 160–165, and Ala-184 contribute to the NAD(+) site; these read DG, NE, and TAYSKS.

This sequence belongs to the NAD kinase family. A divalent metal cation serves as cofactor.

The protein localises to the cytoplasm. The catalysed reaction is NAD(+) + ATP = ADP + NADP(+) + H(+). In terms of biological role, involved in the regulation of the intracellular balance of NAD and NADP, and is a key enzyme in the biosynthesis of NADP. Catalyzes specifically the phosphorylation on 2'-hydroxyl of the adenosine moiety of NAD to yield NADP. This chain is NAD kinase, found in Lactobacillus johnsonii (strain CNCM I-12250 / La1 / NCC 533).